A 258-amino-acid polypeptide reads, in one-letter code: Indole-3-glycerol phosphate synthase (258 aa).

The protein belongs to the TrpC family.

It catalyses the reaction 1-(2-carboxyphenylamino)-1-deoxy-D-ribulose 5-phosphate + H(+) = (1S,2R)-1-C-(indol-3-yl)glycerol 3-phosphate + CO2 + H2O. It participates in amino-acid biosynthesis; L-tryptophan biosynthesis; L-tryptophan from chorismate: step 4/5. The sequence is that of Indole-3-glycerol phosphate synthase from Campylobacter jejuni (strain RM1221).